A 428-amino-acid chain; its full sequence is MSKTHLTEQKFSDFALHPLVLEALEKKGFQHCTPIQALALPLTLSGRDVAGQAQTGTGKTLAFLTSTFHYLLSHPAKQDRKINQPRALIMAPTRELAVQIHSDAEALSQSTGLKMGLAYGGDGYDKQLKVLESGVDILVGTTGRLIDYAKQNYIDLGAIQVVVLDEADRMYDLGFIKDIRWLFRRMPAVDQRLNMLFSATLSYRVRELAFEQMNNAEYVEVEPEQKTGHRIKEELFYPSNEEKMRLLQTLIEEEWPDRCIIFANTKHRCEDVWGHLAADGHRVGLLTGDVAQKKRLRILDDFTKGNLDILVATDVAARGLHIPLVTHVFNYDLPDDCEDYVHRIGRTGRAGESGHSISLACEEYALNLPAIETYTGHSIPVSKYNSDALLSDLPAPKRLARPRGGNGPRRNSAPRRGGAPRNNRKRSG.

Positions 9-37 (QKFSDFALHPLVLEALEKKGFQHCTPIQA) match the Q motif motif. A Helicase ATP-binding domain is found at 40–219 (LPLTLSGRDV…FEQMNNAEYV (180 aa)). An ATP-binding site is contributed by 53 to 60 (AQTGTGKT). The DEAD box motif lies at 165–168 (DEAD). Positions 245-390 (RLLQTLIEEE…VSKYNSDALL (146 aa)) constitute a Helicase C-terminal domain. The disordered stretch occupies residues 392–428 (DLPAPKRLARPRGGNGPRRNSAPRRGGAPRNNRKRSG). Over residues 408-421 (PRRNSAPRRGGAPR) the composition is skewed to low complexity.

It belongs to the DEAD box helicase family. RhlB subfamily. As to quaternary structure, component of the RNA degradosome, which is a multiprotein complex involved in RNA processing and mRNA degradation.

The protein localises to the cytoplasm. The enzyme catalyses ATP + H2O = ADP + phosphate + H(+). In terms of biological role, DEAD-box RNA helicase involved in RNA degradation. Has RNA-dependent ATPase activity and unwinds double-stranded RNA. The sequence is that of ATP-dependent RNA helicase RhlB from Serratia proteamaculans (strain 568).